The chain runs to 137 residues: Probable DNA-directed RNA polymerases I, II, and III subunit RPABC2 (137 aa).

2 stretches are compositionally biased toward acidic residues: residues 1–27 (MADE…VIEE) and 34–43 (NEDEDDDNVD). The disordered stretch occupies residues 1 to 43 (MADEDDYQDMDNDDFVDDNEMEDVIEEDPQRPDNEDEDDDNVD).

It belongs to the archaeal Rpo6/eukaryotic RPB6 RNA polymerase subunit family. As to quaternary structure, component of the RNA polymerase I (Pol I), RNA polymerase II (Pol II) and RNA polymerase III (Pol III) complexes consisting of at least 13, 12 and 17 subunits, respectively.

It is found in the nucleus. Its function is as follows. DNA-dependent RNA polymerases catalyze the transcription of DNA into RNA using the four ribonucleoside triphosphates as substrates. Common component of RNA polymerases I, II and III which synthesize ribosomal RNA precursors, mRNA precursors and many functional non-coding RNAs, and small RNAs, such as 5S rRNA and tRNAs, respectively. Pol II is the central component of the basal RNA polymerase II transcription machinery. Pols are composed of mobile elements that move relative to each other. In Pol II, RPB6 is part of the clamp element and together with parts of RPB1 and RPB2 forms a pocket to which the RPB4-RPB7 subcomplex binds. The protein is Probable DNA-directed RNA polymerases I, II, and III subunit RPABC2 (rpb-6) of Caenorhabditis elegans.